The sequence spans 757 residues: MSENEPAQMIEGRYRIVRNIAEGGMATVYEAIDERLGRTVAIKVMHTQLAKGPHREQFVERFRREANSAASIANPHIVQVYDTGEFNGLDFLVMEYVHGVNLRHEMNAQGTFSVRETLRVVAETLDGLASAHRAGVVHRDIKPENILINDRGHVQITDFGLAKAASQATLSSTGMLLGTAAYLAPEMIENNQATAQGDLYSVGIMAWEMLTGKVPFDSDNPVTLVFKHVHEDVPSVATVCQGIDPSVAAFIAHLTARQVDARPTDGAAAAEELSQLAAKLPLEAWQYRLHAEPIGGDHTDATAAALVGNIAEQAPLTGVPAGAATFKPSVPAFLADDVASNTVDTGGAADVNPPAPPVAPTTALDSSTPADASAPHKTQIMAQSGSETQVLPQAGDAFTRALAFSDEPDVASNGTGPKKQRSKKPLIIVLVIVLVLAAIGGTAGWWWFAGPGSYWSVPKPDDVTCDANASTECSLAGADWATYESTLKALGIPYKTHKEYSDDVAEGKIISSSVNKTKAVVNSRISKRANQELTVVVSKGVRMTTIPKDILDANSANGKDPLNALKKAGFDNVKHDESKDEYSMDTPQGVALTISPDPGTTAKHNDEVTVTLSKGPMPVTMPNIVGKTQDEMQAALGELKLTANVTEQYDDKVEAGQVISASQEAGAQLKWGDSVDVVISKGPEMATIPSGLVGKQESAVTKTLEGLGFEVKTDKVLGGLFGTVRTVKSGDTDLSNGGKIRLRDANGNPTVITLTIV.

One can recognise a Protein kinase domain in the interval 14–274 (YRIVRNIAEG…DGAAAAEELS (261 aa)). Residues 20–28 (IAEGGMATV) and K43 each bind ATP. D140 (proton acceptor) is an active-site residue. Residues 344–387 (DTGGAADVNPPAPPVAPTTALDSSTPADASAPHKTQIMAQSGSE) are disordered. PASTA domains are found at residues 466 to 539 (DANA…VVSK), 545 to 614 (TIPK…TLSK), and 615 to 681 (GPMP…VISK).

It belongs to the protein kinase superfamily. Ser/Thr protein kinase family.

It carries out the reaction L-seryl-[protein] + ATP = O-phospho-L-seryl-[protein] + ADP + H(+). It catalyses the reaction L-threonyl-[protein] + ATP = O-phospho-L-threonyl-[protein] + ADP + H(+). This chain is Probable serine/threonine-protein kinase pknA2 (pknA2), found in Bifidobacterium longum (strain NCC 2705).